Consider the following 511-residue polypeptide: Coatomer subunit delta (511 aa).

The span at 168–177 shows a compositional bias: basic and acidic residues; it reads QARRDAERQG. The segment at 168–188 is disordered; the sequence is QARRDAERQGKKAPGFGGFGS. Phosphoserine is present on Ser223. An N6-acetyllysine mark is found at Lys233 and Lys241. Ser244 is modified (phosphoserine). Positions 271 to 511 constitute an MHD domain; the sequence is MESVHMKIEE…TFLVDKYEIL (241 aa). 2 positions are modified to N6-acetyllysine: Lys309 and Lys351. Ser493 is modified (phosphoserine).

It belongs to the adaptor complexes medium subunit family. Delta-COP subfamily. Oligomeric complex that consists of at least the alpha, beta, beta', gamma, delta, epsilon and zeta subunits. Ubiquitously expressed.

It is found in the cytoplasm. The protein localises to the golgi apparatus membrane. Its subcellular location is the cytoplasmic vesicle. It localises to the COPI-coated vesicle membrane. Functionally, component of the coatomer, a cytosolic protein complex that binds to dilysine motifs and reversibly associates with Golgi non-clathrin-coated vesicles, which further mediate biosynthetic protein transport from the ER, via the Golgi up to the trans Golgi network. The coatomer complex is required for budding from Golgi membranes, and is essential for the retrograde Golgi-to-ER transport of dilysine-tagged proteins. In mammals, the coatomer can only be recruited by membranes associated to ADP-ribosylation factors (ARFs), which are small GTP-binding proteins; the complex also influences the Golgi structural integrity, as well as the processing, activity, and endocytic recycling of LDL receptors. The polypeptide is Coatomer subunit delta (ARCN1) (Homo sapiens (Human)).